The sequence spans 228 residues: Carboxylesterase SOBER1 (228 aa).

Active-site charge relay system residues include Ser-106, Asp-160, and His-192.

It belongs to the AB hydrolase superfamily. AB hydrolase 2 family.

Possesses carboxylesterase activity in vitro with a preference for short acyl chain substrates. Functions as a negative regulator of the hypersensitive response (HR) triggered by the bacterial type III effector protein AvrBsT. Possesses phospholipase A2 (PLA2) activity and hydrolyzes phosphatidylcholine (PC), a lipid that is hydrolyzed by phospholipase D (PLD) to produce phosphatidic acid (PA). Required to suppress AvrBsT-dependent HR and PLD-dependent production of PA in response to AvrBsT elicitation. This is Carboxylesterase SOBER1 from Arabidopsis thaliana (Mouse-ear cress).